Reading from the N-terminus, the 403-residue chain is tRNA(Met) cytidine acetate ligase (403 aa).

ATP-binding positions include 7–20, G101, N164, and 189–190; these read VVEYNPFHNGHAYH and RI.

It belongs to the TmcAL family.

It localises to the cytoplasm. The enzyme catalyses cytidine(34) in elongator tRNA(Met) + acetate + ATP = N(4)-acetylcytidine(34) in elongator tRNA(Met) + AMP + diphosphate. Catalyzes the formation of N(4)-acetylcytidine (ac(4)C) at the wobble position of elongator tRNA(Met), using acetate and ATP as substrates. First activates an acetate ion to form acetyladenylate (Ac-AMP) and then transfers the acetyl group to tRNA to form ac(4)C34. In Lysinibacillus sphaericus (strain C3-41), this protein is tRNA(Met) cytidine acetate ligase.